Consider the following 186-residue polypeptide: NADH dehydrogenase [ubiquinone] 1 beta subcomplex subunit 8, mitochondrial (186 aa).

The transit peptide at 1–28 directs the protein to the mitochondrion; it reads MAVARAGVLGVQWLQRASRNVMPLGART. The chain crosses the membrane as a helical span at residues 133–153; sequence LFGFLAFMIFMCWVGDVYPVY.

It belongs to the complex I NDUFB8 subunit family. In terms of assembly, complex I is composed of 45 different subunits.

It localises to the mitochondrion inner membrane. In terms of biological role, accessory subunit of the mitochondrial membrane respiratory chain NADH dehydrogenase (Complex I), that is believed not to be involved in catalysis. Complex I functions in the transfer of electrons from NADH to the respiratory chain. The immediate electron acceptor for the enzyme is believed to be ubiquinone. This chain is NADH dehydrogenase [ubiquinone] 1 beta subcomplex subunit 8, mitochondrial (NDUFB8), found in Homo sapiens (Human).